The sequence spans 624 residues: Phosphatidylinositol 4-kinase lsb6 (624 aa).

Positions 1–31 (MESTFHSDTLDSFPNYQENSLNTNEEQTNPL) are enriched in polar residues. The disordered stretch occupies residues 1–53 (MESTFHSDTLDSFPNYQENSLNTNEEQTNPLESLRDGWASSNSSSSSSLLLPD). Positions 40–51 (SSNSSSSSSLLL) are enriched in low complexity. The PI3K/PI4K catalytic domain occupies 145-520 (GVFPVLISKG…LLELPNLYVV (376 aa)). Residues 151-157 (ISKGSSG) form a G-loop region. Residues 346-354 (RNTDRNLDN) form a catalytic loop region. An activation loop region spans residues 409–429 (AIDNSLAFPYKHPDSWRSFPY).

The protein belongs to the PI3/PI4-kinase family. Mg(2+) is required as a cofactor. Mn(2+) serves as cofactor.

It is found in the cell membrane. It localises to the vacuole membrane. The protein resides in the golgi apparatus membrane. The enzyme catalyses a 1,2-diacyl-sn-glycero-3-phospho-(1D-myo-inositol) + ATP = a 1,2-diacyl-sn-glycero-3-phospho-(1D-myo-inositol 4-phosphate) + ADP + H(+). In terms of biological role, may play a role in endocytic and/or exocytic pathways. This is Phosphatidylinositol 4-kinase lsb6 (lsb6) from Schizosaccharomyces pombe (strain 972 / ATCC 24843) (Fission yeast).